A 508-amino-acid polypeptide reads, in one-letter code: Small ribosomal subunit protein uS3m (508 aa).

The protein belongs to the universal ribosomal protein uS3 family. As to quaternary structure, component of the mitochondrial small ribosomal subunit (mt-SSU). Mature N.crassa 74S mitochondrial ribosomes consist of a small (37S) and a large (54S) subunit. The 37S small subunit contains a 16S ribosomal RNA (16S mt-rRNA) and 32 different proteins. The 54S large subunit contains a 23S rRNA (23S mt-rRNA) and 42 different proteins. uS3m, uS4m and uS5m form the narrow entry site of the mRNA channel.

The protein resides in the mitochondrion. Its function is as follows. Component of the mitochondrial ribosome (mitoribosome), a dedicated translation machinery responsible for the synthesis of mitochondrial genome-encoded proteins, including at least some of the essential transmembrane subunits of the mitochondrial respiratory chain. The mitoribosomes are attached to the mitochondrial inner membrane and translation products are cotranslationally integrated into the membrane. uS3m is essential for mitochondrial protein synthesis and required for the maturation of small ribosomal subunits. This Neurospora crassa (strain ATCC 24698 / 74-OR23-1A / CBS 708.71 / DSM 1257 / FGSC 987) protein is Small ribosomal subunit protein uS3m (var1).